Consider the following 233-residue polypeptide: Ribose-5-phosphate isomerase A (233 aa).

Substrate-binding positions include Ser-28–Thr-31, Asp-83–Asp-86, and Lys-96–Gly-99. Residue Glu-105 is the Proton acceptor of the active site. Lys-123 provides a ligand contact to substrate.

Belongs to the ribose 5-phosphate isomerase family. As to quaternary structure, homodimer.

The catalysed reaction is aldehydo-D-ribose 5-phosphate = D-ribulose 5-phosphate. It participates in carbohydrate degradation; pentose phosphate pathway; D-ribose 5-phosphate from D-ribulose 5-phosphate (non-oxidative stage): step 1/1. Catalyzes the reversible conversion of ribose-5-phosphate to ribulose 5-phosphate. The chain is Ribose-5-phosphate isomerase A from Maricaulis maris (strain MCS10) (Caulobacter maris).